The sequence spans 411 residues: MDAIILCAGKGTRLHPITESRPKPMIPIAGKPIIEHIIEKIENHVEKIYLIVGYQKEKIIDYFKDNPKIEYILQEKQLGTGHAVLTAKNFIKGDFLVLNGDVIFEDSIDEILNYENAVSLSNVDNPENFGVIELGYDNKIINLLEKPKKEEITSNLINAGIYKLQNSVFGILENLAPSERGEIELTDALKKLIENGKLHGVELKGYWNDIGHPWDVLSANNHFLNKIISKVSGKIENTVSITGNVIIEEGAVIKPNSVIEGPAIIKSGSIVGPLAYVRPNTVLMKNTFVGNSSEIKGSIIFENTKIPHLSYVGDSIIGANCNFGCNTITANLRFDDKPVIVNIKGKPVKSVRKLGAIIGDCVKTGIQVSFMPGVKIGSNSLIGANCLIDRDIEQESFVYKKDELVITKKRN.

Residues 1 to 204 (MDAIILCAGK…NGKLHGVELK (204 aa)) form a pyrophosphorylase region. Residues 6–9 (LCAG), Gln74, and Gly79 contribute to the UTP site. Residues Thr80, Gly130, Asn142, and Asn158 each coordinate N-acetyl-alpha-D-glucosamine 1-phosphate. Residues 205–224 (GYWNDIGHPWDVLSANNHFL) are linker. Residues 225-411 (NKIISKVSGK…DELVITKKRN (187 aa)) are N-acetyltransferase. Residue His308 is the Proton acceptor of the active site. Ala384 and Lys401 together coordinate acetyl-CoA.

It in the N-terminal section; belongs to the N-acetylglucosamine-1-phosphate uridyltransferase family. In the C-terminal section; belongs to the transferase hexapeptide repeat family.

The enzyme catalyses N-acetyl-alpha-D-glucosamine 1-phosphate + UTP + H(+) = UDP-N-acetyl-alpha-D-glucosamine + diphosphate. It catalyses the reaction alpha-D-glucosamine 1-phosphate + acetyl-CoA = N-acetyl-alpha-D-glucosamine 1-phosphate + CoA + H(+). It participates in nucleotide-sugar biosynthesis; UDP-N-acetyl-alpha-D-glucosamine biosynthesis; N-acetyl-alpha-D-glucosamine 1-phosphate from alpha-D-glucosamine 6-phosphate (route II): step 2/2. It functions in the pathway nucleotide-sugar biosynthesis; UDP-N-acetyl-alpha-D-glucosamine biosynthesis; UDP-N-acetyl-alpha-D-glucosamine from N-acetyl-alpha-D-glucosamine 1-phosphate: step 1/1. Functionally, catalyzes the last two sequential reactions in the de novo biosynthetic pathway for UDP-N-acetyl-glucosamine (UDP-GlcNAc). Responsible for the acetylation of GlcN-1-P to GlcNAc-1-P, and for the uridyl transfer from UTP to GlcNAc-1-P, to produce UDP-GlcNAc and pyrophosphate. The chain is Bifunctional protein GlmU from Methanococcus maripaludis (strain DSM 14266 / JCM 13030 / NBRC 101832 / S2 / LL).